Here is a 441-residue protein sequence, read N- to C-terminus: Tol-Pal system protein TolB (441 aa).

The N-terminal stretch at Met1–Ala39 is a signal peptide.

Belongs to the TolB family. In terms of assembly, the Tol-Pal system is composed of five core proteins: the inner membrane proteins TolA, TolQ and TolR, the periplasmic protein TolB and the outer membrane protein Pal. They form a network linking the inner and outer membranes and the peptidoglycan layer.

It is found in the periplasm. In terms of biological role, part of the Tol-Pal system, which plays a role in outer membrane invagination during cell division and is important for maintaining outer membrane integrity. This Bordetella avium (strain 197N) protein is Tol-Pal system protein TolB.